A 294-amino-acid chain; its full sequence is Negative regulator of the PHO system (294 aa).

The Protein kinase domain occupies 7-289 (FQQLEKLGEG…ARQSLEHPWF (283 aa)). ATP contacts are provided by residues 13-21 (LGEGTYATV) and Lys-36. Asp-130 functions as the Proton acceptor in the catalytic mechanism.

It belongs to the protein kinase superfamily. CMGC Ser/Thr protein kinase family. CDC2/CDKX subfamily. Interacts with a number of cyclins.

It catalyses the reaction L-seryl-[protein] + ATP = O-phospho-L-seryl-[protein] + ADP + H(+). It carries out the reaction L-threonyl-[protein] + ATP = O-phospho-L-threonyl-[protein] + ADP + H(+). When phosphate concentrations are high it phosphorylates the PHO4 transcription factor thus establishing repression. In Yarrowia lipolytica (strain CLIB 122 / E 150) (Yeast), this protein is Negative regulator of the PHO system (PHO85).